Reading from the N-terminus, the 231-residue chain is Verlamelin biosynthesis protein B (231 aa).

Its pathway is secondary metabolite biosynthesis. Its function is as follows. Part of the gene cluster that mediates the biosynthesis of verlamelin, a lipopeptide that exhibits antifungal activity against plant pathogenic fungi. Verlamelin is a cyclic hexadepsipeptide and is bridged by ester bonding between a 5-hydroxytetradecanoic acid moiety and a carboxyl group on the terminal Val of amide-bonded tetradecanoyl-hexapeptide D-allo-Thr-D-Ala-L-Pro-L-Gln-D-Tyr-L-Val. VlmA and vlmB are altogether regarded as essential components in the biosynthesis of 5-hydroxytetradecanoic acid. VlmA catalyzes the hydroxylation at position C5 of tetradecanoic acid produced in primary metabolism, while the precise function of vlmB still remains to be solved. To be loaded onto the waiting NRPS, 5-hydroxytetradecanoic acid is activated in the form of acyladenylate by the AMP-dependent ligase vlmC. VlmS seems to accept the fatty-acyl intermediate onto the initial module to further elongate amino acid residues by the downstream modules. In addition, in the last module at its C-terminus, vlmS contains a surplus condensation (C) domain that may be involved in cyclization, the last step to form verlamelin. The polypeptide is Verlamelin biosynthesis protein B (Lecanicillium sp).